We begin with the raw amino-acid sequence, 55 residues long: Putative virulence-regulating protein PA2146 (55 aa).

The segment at 1–55 is disordered; the sequence is MAQHQGGKGNFAEDPKRASEAGKKGGQASGGNFKNDPQRASEAGKKGGQRSHGGN. Basic and acidic residues-rich tracts occupy residues 11–23 and 36–45; these read FAED…EAGK and DPQRASEAGK.

It belongs to the con-10 family.

In terms of biological role, may be involved in the regulation of the production of pyocyanine, one of the major virulence factors secreted by P.aeruginosa, and other virulence factors. The sequence is that of Putative virulence-regulating protein PA2146 from Pseudomonas aeruginosa (strain ATCC 15692 / DSM 22644 / CIP 104116 / JCM 14847 / LMG 12228 / 1C / PRS 101 / PAO1).